The sequence spans 1050 residues: Antibiotic efflux pump membrane transporter ArpB (1050 aa).

12 consecutive transmembrane segments (helical) span residues 10-30 (IFAW…ILKL), 339-359 (GVIH…YLFL), 370-390 (MTVP…GFSI), 393-413 (LTMF…IVVV), 440-460 (GALV…AFFG), 472-492 (ITIV…TPAL), 539-559 (VPFL…FARI), 871-891 (MPAL…ALYE), 893-913 (WSIP…ALIA), 923-943 (VYFL…AILI), 972-992 (IIMT…ASGA), and 1004-1024 (VIGG…LFFV).

It belongs to the resistance-nodulation-cell division (RND) (TC 2.A.6) family.

The protein localises to the cell inner membrane. In terms of biological role, the inner membrane transporter component of an antibiotic efflux pump. Confers resistance to numerous structurally unrelated antibiotics such as carbenicillin, chloramphenicol, erythromycin, novobiocin, streptomycin and tetracycline. Is not involved in organic solvent efflux. This chain is Antibiotic efflux pump membrane transporter ArpB (arpB), found in Pseudomonas putida (Arthrobacter siderocapsulatus).